Reading from the N-terminus, the 67-residue chain is Light-harvesting protein B-870 alpha chain (67 aa).

Residues 1–12 (MWRIWRLFDPMR) lie on the Cytoplasmic side of the membrane. A helical membrane pass occupies residues 13-33 (AMVAQAVFLLGLAVLIHLMLL). H29 serves as a coordination point for a bacteriochlorophyll. The Periplasmic segment spans residues 34 to 67 (GTNKYNWLDGAKKAPVATAVAPVPAEVTSLAQAK).

This sequence belongs to the antenna complex alpha subunit family. As to quaternary structure, an alpha/beta heterodimer. The core complex is formed by different alpha and beta chains, binding bacteriochlorophyll molecules, and arranged most probably in tetrameric structures disposed around the reaction center. The non-pigmented gamma chains may constitute additional components.

Its subcellular location is the cell inner membrane. In terms of biological role, antenna complexes are light-harvesting systems, which transfer the excitation energy to the reaction centers. The polypeptide is Light-harvesting protein B-870 alpha chain (pufA) (Rubrivivax gelatinosus (strain NBRC 100245 / IL144)).